A 59-amino-acid polypeptide reads, in one-letter code: Large ribosomal subunit protein bL32c (59 aa).

Positions 1 to 20 (MAVPKKRTSKSKKRIRKSVW) are disordered.

It belongs to the bacterial ribosomal protein bL32 family.

The protein localises to the plastid. It is found in the chloroplast. The protein is Large ribosomal subunit protein bL32c of Angiopteris evecta (Mule's foot fern).